Consider the following 259-residue polypeptide: DNA-directed RNA polymerase 30 kDa polypeptide (259 aa).

The TFIIS-type zinc-finger motif lies at 155–195 (YNTPCPNCKSRNTTPMMIQTRAADEPPLVRHACRDCKQHFK). The Zn(2+) site is built by Cys159, Cys162, Cys187, and Cys190. The segment at 214–259 (ENKEITEILPDNNPSPPESPEPASPIDDGLIRSTFDRNDEPPEDDE) is disordered. Residues 226-236 (NPSPPESPEPA) show a composition bias toward pro residues.

The protein belongs to the poxviridae DNA-directed RNA polymerase 30 kDa subunit family. In terms of assembly, the DNA-dependent RNA polymerase (vRNAP) consists of eight subunits encoded by early viral genes and termed according to their apparent molecular masses Rpo147, Rpo132, Rpo35, Rpo30, Rpo22, Rpo19, Rpo18, and Rpo7. The same holoenzyme, with the addition of the transcription-specificity factor RAP94, is used for early gene expression.

It localises to the virion. Its subcellular location is the host cytoplasm. It catalyses the reaction RNA(n) + a ribonucleoside 5'-triphosphate = RNA(n+1) + diphosphate. In terms of biological role, part of the DNA-dependent RNA polymerase which catalyzes the transcription of viral DNA into RNA using the four ribonucleoside triphosphates as substrates. Responsible for the transcription of early, intermediate and late genes. DNA-dependent RNA polymerase associates with the early transcription factor (ETF), itself composed of OPG118/D6 and OPG134/A8, thereby allowing the early genes transcription. Late transcription, and probably also intermediate transcription, require newly synthesized RNA polymerase. This chain is DNA-directed RNA polymerase 30 kDa polypeptide (OPG066), found in Homo sapiens (Human).